The sequence spans 617 residues: Dihydroxy-acid dehydratase (617 aa).

Aspartate 81 is a binding site for Mg(2+). Residue cysteine 122 coordinates [2Fe-2S] cluster. Positions 123 and 124 each coordinate Mg(2+). Lysine 124 is modified (N6-carboxylysine). Cysteine 197 serves as a coordination point for [2Fe-2S] cluster. Glutamate 493 is a Mg(2+) binding site. Residue serine 519 is the Proton acceptor of the active site.

This sequence belongs to the IlvD/Edd family. As to quaternary structure, homodimer. [2Fe-2S] cluster serves as cofactor. Requires Mg(2+) as cofactor.

It catalyses the reaction (2R)-2,3-dihydroxy-3-methylbutanoate = 3-methyl-2-oxobutanoate + H2O. The catalysed reaction is (2R,3R)-2,3-dihydroxy-3-methylpentanoate = (S)-3-methyl-2-oxopentanoate + H2O. It functions in the pathway amino-acid biosynthesis; L-isoleucine biosynthesis; L-isoleucine from 2-oxobutanoate: step 3/4. Its pathway is amino-acid biosynthesis; L-valine biosynthesis; L-valine from pyruvate: step 3/4. In terms of biological role, functions in the biosynthesis of branched-chain amino acids. Catalyzes the dehydration of (2R,3R)-2,3-dihydroxy-3-methylpentanoate (2,3-dihydroxy-3-methylvalerate) into 2-oxo-3-methylpentanoate (2-oxo-3-methylvalerate) and of (2R)-2,3-dihydroxy-3-methylbutanoate (2,3-dihydroxyisovalerate) into 2-oxo-3-methylbutanoate (2-oxoisovalerate), the penultimate precursor to L-isoleucine and L-valine, respectively. The polypeptide is Dihydroxy-acid dehydratase (Corynebacterium aurimucosum (strain ATCC 700975 / DSM 44827 / CIP 107346 / CN-1) (Corynebacterium nigricans)).